A 247-amino-acid chain; its full sequence is Probable transcriptional regulatory protein PC1_1817 (247 aa).

This sequence belongs to the TACO1 family.

The protein resides in the cytoplasm. This is Probable transcriptional regulatory protein PC1_1817 from Pectobacterium carotovorum subsp. carotovorum (strain PC1).